The sequence spans 1048 residues: MASPASTNPAHDHFETFVQAQLCQDVLSSFQGLCRALGVESGGGLSQYHKIKAQLNYWSAKSLWAKLDKRASQPVYQQGQACTNTKCLVVGAGPCGLRAAVELALLGARVVLVEKRIKFSRHNVLHLWPFTIHDLRALGAKKFYGRFCTGTLDHISIRQLQLLLLKVALLLGVEIHWGVKFTGLQPPPRKGSGWRAQLQPNPPAQLASYEFDVLISAAGGKFVPEGFTIREMRGKLAIGITANFVNGRTVEETQVPEISGVARIYNQKFFQSLLKATGIDLENIVYYKDETHYFVMTAKKQCLLRLGVLRQDLSETDQLLGKANVVPEALQRFARAAADFATHGKLGKLEFAQDARGRPDVAAFDFTSMMRAESSARVQEKHGARLLLGLVGDCLVEPFWPLGTGVARGFLAAFDAAWMVKRWAEGAGPLEVLAERESLYQLLSQTSPENMHRNVAQYGLDPATRYPNLNLRAVTPNQVQDLYDMMDKEHAQRKSDEPDSRKTTTGSAGTEELLHWCQEQTAGFPGVHVTDFSSSWADGLALCALVHHLQPGLLEPSELQGMGALEATTWALRVAEHELGITPVLSAQAVMAGSDPLGLIAYLSHFHSAFKNTSHSSGLVSQPSGTPSAILFLGKLQRSLQRTRAKVDEETPSTEEPPVSEPSMSPNTPELSEHQEAGAEELCELCGKHLYILERFCVDGHFFHRSCFCCHTCEATLWPGGYGQHPGDGHFYCLQHLPQEDQKEADNNGSLESQELPTPGDSNMQPDPSSPPVTRVSPVPSPSQPARRLIRLSSLERLRLSSLNIIPDSGAEPPPKPPRSCSDLARESLKSSFVGWGVPVQAPQVPEAIEKGDDEEEEEEEEEEEEEPLPPLEPELEQTLLTLAKNPGAMTKYPTWRRTLMRRAKEEEMKRFCKAQAIQRRLNEIEATMRELEAEGTKLELALRKESSSPEQQKKLWLDQLLRLIQKKNSLVTEEAELMITVQELDLEEKQRQLDHELRGYMNREETMKTEADLQSENQVLRKLLEVVNQRDALIQFQEERRLREMPA.

The monooxygenase domain stretch occupies residues 1–489 (MASPASTNPA…QDLYDMMDKE (489 aa)). FAD-binding positions include C95, 114–116 (EKR), 121–123 (RHN), F181, Y293, and D393. T475 is modified (phosphothreonine). A compositionally biased stretch (basic and acidic residues) spans 488–502 (KEHAQRKSDEPDSRK). The disordered stretch occupies residues 488–508 (KEHAQRKSDEPDSRKTTTGSA). The Calponin-homology (CH) domain occupies 507 to 611 (SAGTEELLHW…YLSHFHSAFK (105 aa)). S616 carries the phosphoserine modification. Residues 643-676 (TRAKVDEETPSTEEPPVSEPSMSPNTPELSEHQE) are disordered. Residues 654 to 666 (TEEPPVSEPSMSP) show a composition bias toward low complexity. Positions 681-743 (ELCELCGKHL…LQHLPQEDQK (63 aa)) constitute an LIM zinc-binding domain. Residues C683, C686, H704, C707, C710, C713, C733, and H736 each coordinate Zn(2+). Disordered regions lie at residues 741 to 787 (DQKE…QPAR), 805 to 825 (IIPD…SDLA), and 839 to 873 (PVQA…PPLE). Positions 747-765 (NNGSLESQELPTPGDSNMQ) are enriched in polar residues. Positions 772-787 (PVTRVSPVPSPSQPAR) are enriched in low complexity. S777 and S781 each carry phosphoserine. Coiled-coil stretches lie at residues 847 to 867 (EAIE…EEEE), 906 to 949 (EEEM…ESSS), and 974 to 1031 (EEAE…VNQR). Residues 852-868 (GDDEEEEEEEEEEEEEP) show a composition bias toward acidic residues. Residues 905–1048 (KEEEMKRFCK…EERRLREMPA (144 aa)) form the bMERB domain.

This sequence belongs to the Mical family. Associates with the SH3 domain of NEDD9. Interacts with VIM and PLXNA3. Interacts with RAB1B, RAB8A, RAB10, RAB13 and RAB15 (in their GTP-bound forms); binding to RAB1B is of low affinity compared to other Rab proteins; at least in case of RAB8A and RAB10 can bind 2 molecules of the Rab proteins simultaneously. Interacts with STK38 and STK38L. Interacts with GRAF1/ARHGAP26, GRAF2/ARHGAP10, RAB8A, RAB8B and RAB10; may bind simultaneously to GRAFs and Rabs and connects GRAFs to Rabs. Does not interact with RAB1 and RAB11A. It depends on FAD as a cofactor. In terms of tissue distribution, expressed in the postnatal and adult hippocampus; found in dentate gyrus, the polymorphic layer, cornu ammonis (CA) 1-3 and in mossy fibers of the striatum lucidum. In adult hippocampus strongly expressed in CA3 pyramidial neurons.

The protein resides in the cytoplasm. The protein localises to the cytoskeleton. It is found in the endosome membrane. Its subcellular location is the midbody. It catalyses the reaction L-methionyl-[F-actin] + NADPH + O2 + H(+) = L-methionyl-(R)-S-oxide-[F-actin] + NADP(+) + H2O. The enzyme catalyses NADPH + O2 + H(+) = H2O2 + NADP(+). Its function is as follows. Monooxygenase that promotes depolymerization of F-actin by mediating oxidation of specific methionine residues on actin to form methionine-sulfoxide, resulting in actin filament disassembly and preventing repolymerization. In the absence of actin, it also functions as a NADPH oxidase producing H(2)O(2). Acts as a cytoskeletal regulator that connects NEDD9 to intermediate filaments. Also acts as a negative regulator of apoptosis via its interaction with STK38 and STK38L; acts by antagonizing STK38 and STK38L activation by MST1/STK4. Involved in regulation of lamina-specific connectivity in the nervous system such as the development of lamina-restricted hippocampal connections. Through redox regulation of the actin cytoskeleton controls the intracellular distribution of secretory vesicles containing L1/neurofascin/NgCAM family proteins in neurons, thereby regulating their cell surface levels. May act as Rab effector protein and play a role in vesicle trafficking. Promotes endosomal tubule extension by associating with RAB8 (RAB8A or RAB8B), RAB10 and GRAF (GRAF1/ARHGAP26 or GRAF2/ARHGAP10) on the endosomal membrane which may connect GRAFs to Rabs, thereby participating in neosynthesized Rab8-Rab10-Rab11-dependent protein export. In Mus musculus (Mouse), this protein is [F-actin]-monooxygenase MICAL1 (Mical1).